The following is a 536-amino-acid chain: Multicopper oxidase CueO (536 aa).

A signal peptide (tat-type signal) is located at residues 1–28; sequence MLRRDFLKYSVALGVASALPLWSRAAFA. Plastocyanin-like domains are found at residues 53–165, 229–295, and 424–536; these read KAGQ…IEDD, GWLR…AFDL, and FHNA…GFTV. Cu cation is bound by residues His101, His103, His141, and His143. 7 residues coordinate Cu cation: His463, His466, His468, His519, Cys520, His521, and His525.

Belongs to the multicopper oxidase family. In terms of assembly, monomer. Cu cation serves as cofactor. Post-translationally, predicted to be exported by the Tat system. The position of the signal peptide cleavage has not been experimentally proven.

The protein localises to the periplasm. It carries out the reaction 4 Cu(+) + O2 + 4 H(+) = 4 Cu(2+) + 2 H2O. Its function is as follows. Multicopper oxidase involved in copper homeostasis and copper tolerance under both aerobic and anaerobic conditions. Is responsible for the oxidation of Cu(+) to the less harmful Cu(2+) in the periplasm, thereby preventing Cu(+) from entering the cytoplasm. The polypeptide is Multicopper oxidase CueO (cueO) (Salmonella typhimurium (strain LT2 / SGSC1412 / ATCC 700720)).